A 225-amino-acid polypeptide reads, in one-letter code: NAD(P)H-quinone oxidoreductase subunit K, chloroplastic (225 aa).

[4Fe-4S] cluster is bound by residues Cys43, Cys44, Cys108, and Cys139.

This sequence belongs to the complex I 20 kDa subunit family. In terms of assembly, NDH is composed of at least 16 different subunits, 5 of which are encoded in the nucleus. [4Fe-4S] cluster serves as cofactor.

The protein localises to the plastid. Its subcellular location is the chloroplast thylakoid membrane. The catalysed reaction is a plastoquinone + NADH + (n+1) H(+)(in) = a plastoquinol + NAD(+) + n H(+)(out). The enzyme catalyses a plastoquinone + NADPH + (n+1) H(+)(in) = a plastoquinol + NADP(+) + n H(+)(out). NDH shuttles electrons from NAD(P)H:plastoquinone, via FMN and iron-sulfur (Fe-S) centers, to quinones in the photosynthetic chain and possibly in a chloroplast respiratory chain. The immediate electron acceptor for the enzyme in this species is believed to be plastoquinone. Couples the redox reaction to proton translocation, and thus conserves the redox energy in a proton gradient. This Lolium perenne (Perennial ryegrass) protein is NAD(P)H-quinone oxidoreductase subunit K, chloroplastic.